A 295-amino-acid chain; its full sequence is Replication-associated protein A (295 aa).

The CRESS-DNA virus Rep endonuclease domain occupies 12–114; sequence RLQTKYVFLT…DGNVITKGEF (103 aa). The RCR-1 motif lies at 19-22; it reads FLTY. Residues E53, H61, and H63 each coordinate a divalent metal cation. Residues 61-63 carry the RCR-2 motif; sequence HLH. Y101 acts as the For DNA cleavage activity in catalysis. The short motif at 101 to 104 is the RCR-3 element; sequence YISK. Position 105 (D105) interacts with a divalent metal cation. Residues 163–175 form an oligomerization region; the sequence is SANKLFPPQPEIY. An LXCXE motif, interaction with host RBR1 motif is present at residues 184–188; the sequence is LQCHE. Residues 232-295 form a disordered region; that stretch reads EGLEPGSPPS…PSNSSHSGSN (64 aa). The segment covering 267-295 has biased composition (low complexity); that stretch reads PSTSLSMMTTRPTTSSTTSPSNSSHSGSN.

It belongs to the geminiviridae Rep protein family. Homooligomer. Interacts (via LXCXE domain) with host retinoblastoma-related protein 1 (RBR1), and may thereby deregulate the host cell cycle. Part of the C- and V-complexes which are RepA-Rep-DNA complexes involved in the c-sense and v-sense transcription. The cofactor is Mg(2+). Mn(2+) is required as a cofactor.

Its subcellular location is the host nucleus. It localises to the host cytoplasm. Its function is as follows. Implicated in enhancement of V-sense gene expression. Acts a an inhibitor of C-sense gene transcription. The protein is Replication-associated protein A of Datura stramonium (Jimsonweed).